Reading from the N-terminus, the 190-residue chain is Nuclear transcription factor Y subunit A-7 (190 aa).

A disordered region spans residues 1–33; the sequence is MTSSIHELSDNIGSHEKQEQRDSHFQPPIPSAR. Positions 7–24 are enriched in basic and acidic residues; the sequence is ELSDNIGSHEKQEQRDSH. Positions 103-126 match the Subunit association domain (SAD) motif; that stretch reads FVNAKQYHGILRRRQSRARLESQN. A DNA-binding region (NFYA/HAP2-type) is located at residues 133-158; sequence KPYLHESRHLHAIRRPRGCGGRFLNA. Residues 147 to 190 are disordered; that stretch reads RPRGCGGRFLNAKKEDEHHEDSSHEEKSNLSAGKSAMAASSGTS. The segment covering 158–174 has biased composition (basic and acidic residues); that stretch reads AKKEDEHHEDSSHEEKS. The segment covering 177–190 has biased composition (low complexity); the sequence is SAGKSAMAASSGTS.

The protein belongs to the NFYA/HAP2 subunit family. Heterotrimeric transcription factor composed of three components, NF-YA, NF-YB and NF-YC. NF-YB and NF-YC must interact and dimerize for NF-YA association and DNA binding.

The protein resides in the nucleus. Its function is as follows. Stimulates the transcription of various genes by recognizing and binding to a CCAAT motif in promoters. The polypeptide is Nuclear transcription factor Y subunit A-7 (NFYA7) (Arabidopsis thaliana (Mouse-ear cress)).